The following is a 115-amino-acid chain: NADH-ubiquinone oxidoreductase chain 3 (115 aa).

Transmembrane regions (helical) follow at residues 3 to 23, 55 to 75, and 84 to 104; these read LIMT…IAFW, FFLV…LLPL, and LTTM…SLAY.

It belongs to the complex I subunit 3 family. Core subunit of respiratory chain NADH dehydrogenase (Complex I) which is composed of 45 different subunits. Interacts with TMEM186. Interacts with TMEM242.

It localises to the mitochondrion inner membrane. The enzyme catalyses a ubiquinone + NADH + 5 H(+)(in) = a ubiquinol + NAD(+) + 4 H(+)(out). Core subunit of the mitochondrial membrane respiratory chain NADH dehydrogenase (Complex I) which catalyzes electron transfer from NADH through the respiratory chain, using ubiquinone as an electron acceptor. Essential for the catalytic activity of complex I. The protein is NADH-ubiquinone oxidoreductase chain 3 of Ailurus fulgens (Himalayan red panda).